Here is a 1254-residue protein sequence, read N- to C-terminus: SUN domain-containing ossification factor (1254 aa).

Positions 1 to 29 (MKKHRRALALVSCLFLCSLVWLPSWRVCC) are cleaved as a signal peptide. Disordered stretches follow at residues 58-88 (KKDE…HKLK), 118-270 (EESS…DIPT), and 282-304 (EKEK…KKVQ). Over residues 130-145 (VENISSSSTSEITPIS) the composition is skewed to low complexity. Residues 165 to 175 (EQSETDCDVGE) show a composition bias toward acidic residues. Residues Asn-202 and Asn-236 are each glycosylated (N-linked (GlcNAc...) asparagine). Residues 241–253 (LKNESSDYTKPGD) are compositionally biased toward basic and acidic residues. The region spanning 284 to 453 (EKSQSMHASS…SLIRVFGTSM (170 aa)) is the SUN domain. The span at 288–297 (SMHASSNGGS) shows a compositional bias: polar residues. N-linked (GlcNAc...) asparagine glycosylation occurs at Asn-524. Disordered stretches follow at residues 530-553 (NATA…PSPE), 583-605 (EEEE…EDES), and 759-788 (HIPS…SSIE). The segment covering 540-553 (PESTPVSTPVPSPE) has biased composition (low complexity). The stretch at 909-1009 (NQKESVFMRL…VAELKREVSD (101 aa)) forms a coiled coil. Asn-928 and Asn-955 each carry an N-linked (GlcNAc...) asparagine glycan. Residues 1011 to 1031 (QSYLVISLVLCVVLGLMLCMQ) traverse the membrane as a helical segment. At Ser-1081 the chain carries Phosphoserine. The interval 1152–1172 (EVYHSSYKGPPSEGSSETSSQ) is disordered. The segment covering 1163–1172 (SEGSSETSSQ) has biased composition (low complexity).

In terms of processing, O-glycosylated. O-mannosylated by POMT1 and POMT2 and elongated by POMGNT1. Post-translationally, N-glycosylated. As to expression, highly expressed in pancreas and testis and to a lower extent in prostate, ovary, heart, thymus, small intestine and spleen.

The protein resides in the rough endoplasmic reticulum membrane. Functionally, required for bone modeling during late embryogenesis. Regulates type I collagen synthesis in osteoblasts during their postnatal maturation. This Homo sapiens (Human) protein is SUN domain-containing ossification factor (SUCO).